Here is a 328-residue protein sequence, read N- to C-terminus: Flap endonuclease 1 (328 aa).

The segment at 1 to 98 (MGVKLRDVVS…ETVSRRADIR (98 aa)) is N-domain. Residues aspartate 27, aspartate 80, glutamate 152, glutamate 154, aspartate 173, aspartate 175, and aspartate 226 each coordinate Mg(2+). The interval 116-247 (RAKKYAVRSS…RGLKLIREKG (132 aa)) is I-domain. Residues 320–328 (TQKSLEDWF) are interaction with PCNA.

It belongs to the XPG/RAD2 endonuclease family. FEN1 subfamily. In terms of assembly, interacts with PCNA. PCNA stimulates the nuclease activity without altering cleavage specificity. It depends on Mg(2+) as a cofactor.

In terms of biological role, structure-specific nuclease with 5'-flap endonuclease and 5'-3' exonuclease activities involved in DNA replication and repair. During DNA replication, cleaves the 5'-overhanging flap structure that is generated by displacement synthesis when DNA polymerase encounters the 5'-end of a downstream Okazaki fragment. Binds the unpaired 3'-DNA end and kinks the DNA to facilitate 5' cleavage specificity. Cleaves one nucleotide into the double-stranded DNA from the junction in flap DNA, leaving a nick for ligation. Also involved in the base excision repair (BER) pathway. Acts as a genome stabilization factor that prevents flaps from equilibrating into structures that lead to duplications and deletions. Also possesses 5'-3' exonuclease activity on nicked or gapped double-stranded DNA. This chain is Flap endonuclease 1, found in Methanothermobacter thermautotrophicus (strain ATCC 29096 / DSM 1053 / JCM 10044 / NBRC 100330 / Delta H) (Methanobacterium thermoautotrophicum).